The chain runs to 362 residues: S-adenosylmethionine decarboxylase proenzyme 2 (362 aa).

Residues E9 and E12 contribute to the active site. E68 lines the substrate pocket. S69 serves as the catalytic Schiff-base intermediate with substrate; via pyruvic acid. S69 is subject to Pyruvic acid (Ser); by autocatalysis. Catalysis depends on C83, which acts as the Proton donor; for catalytic activity. Residues S232 and H245 each act as proton acceptor; for processing activity in the active site. A substrate-binding site is contributed by E249.

This sequence belongs to the eukaryotic AdoMetDC family. It depends on pyruvate as a cofactor. Is synthesized initially as an inactive proenzyme. Formation of the active enzyme involves a self-maturation process in which the active site pyruvoyl group is generated from an internal serine residue via an autocatalytic post-translational modification. Two non-identical subunits are generated from the proenzyme in this reaction, and the pyruvate is formed at the N-terminus of the alpha chain, which is derived from the carboxyl end of the proenzyme. The post-translation cleavage follows an unusual pathway, termed non-hydrolytic serinolysis, in which the side chain hydroxyl group of the serine supplies its oxygen atom to form the C-terminus of the beta chain, while the remainder of the serine residue undergoes an oxidative deamination to produce ammonia and the pyruvoyl group blocking the N-terminus of the alpha chain.

It catalyses the reaction S-adenosyl-L-methionine + H(+) = S-adenosyl 3-(methylsulfanyl)propylamine + CO2. It participates in amine and polyamine biosynthesis; S-adenosylmethioninamine biosynthesis; S-adenosylmethioninamine from S-adenosyl-L-methionine: step 1/1. Essential for biosynthesis of the polyamines spermidine and spermine. Essential for polyamine homeostasis, and normal plant embryogenesis, growth and development. This is S-adenosylmethionine decarboxylase proenzyme 2 from Arabidopsis thaliana (Mouse-ear cress).